A 517-amino-acid polypeptide reads, in one-letter code: Ascochitine biosynthesis cluster MFS transporter (517 aa).

Residues 1–12 (MSPDSRDPEAQR) are compositionally biased toward basic and acidic residues. A disordered region spans residues 1 to 45 (MSPDSRDPEAQRDVGLTKNTSSVNIPLESVKTDKTSNASPIMGPG). Asparagine 19 is a glycosylation site (N-linked (GlcNAc...) asparagine). The next 12 membrane-spanning stretches (helical) occupy residues 75–95 (WVITWLLSFLNVWVTFSSTIF), 111–131 (VVMTLGVSLTVLGFAVGPLIW), 141–161 (LTPFYFGYAVFCIFQIPVGVA), 172–192 (FFIGFFGTSAMAVTPGVLADI), 204–224 (VYAAAAFIGPIFGPIVGGFVV), 232–252 (WTAWITLILASAFGLAALVFV), 308–328 (ILLLVTLYISLVYGVLYLFFV), 347–367 (ALPLLAVMLGTLAGCLTILFV), 390–410 (LMMVGSVSLPIGLFWFGWTSS), 421–441 (AGFPIGIGLALIWVQGLSFLI), 457–475 (LIRSAVGAAFPLFGAPMYH), and 485–505 (LLGFLSVAMIPIPVAFYYYGP).

The protein belongs to the major facilitator superfamily. CAR1 family.

Its subcellular location is the membrane. Its function is as follows. MFS transporter; part of the gene cluster that mediates the biosynthesis the mycotoxin ascochitine, an o-quinone methide that plays a possible protective role against other microbial competitors in nature and is considered to be important for pathogenicity of legume-associated Didymella species. This is Ascochitine biosynthesis cluster MFS transporter from Didymella fabae (Leaf and pod spot disease fungus).